Reading from the N-terminus, the 309-residue chain is Olfactory receptor 5AK2 (309 aa).

Residues Met-1–Cys-25 lie on the Extracellular side of the membrane. An N-linked (GlcNAc...) asparagine glycan is attached at Asn-5. Residues Ile-26–Ile-46 form a helical membrane-spanning segment. Over Leu-47–Arg-54 the chain is Cytoplasmic. Residues Phe-55–Ser-75 form a helical membrane-spanning segment. The Extracellular portion of the chain corresponds to Ala-76–Ile-99. Residues Cys-97 and Cys-189 are joined by a disulfide bond. The helical transmembrane segment at Gln-100–Val-120 threads the bilayer. The Cytoplasmic segment spans residues Asp-121–Thr-133. Residues Val-134 to Ile-154 traverse the membrane as a helical segment. N-linked (GlcNAc...) asparagine glycosylation occurs at Asn-155. Residues Asn-155–Ile-196 are Extracellular-facing. The helical transmembrane segment at Met-197–Ser-217 threads the bilayer. Residues Tyr-218–Ser-237 lie on the Cytoplasmic side of the membrane. A helical membrane pass occupies residues Phe-238–Met-258. Residues Tyr-259–Met-271 lie on the Extracellular side of the membrane. Asn-265 carries an N-linked (GlcNAc...) asparagine glycan. The chain crosses the membrane as a helical span at residues Lys-272–Leu-292. Residues Arg-293–Phe-309 are Cytoplasmic-facing.

This sequence belongs to the G-protein coupled receptor 1 family.

The protein localises to the cell membrane. Its function is as follows. Odorant receptor. This is Olfactory receptor 5AK2 (OR5AK2) from Homo sapiens (Human).